The chain runs to 332 residues: DNA-directed RNA polymerase subunit alpha (332 aa).

The tract at residues 2–234 (TVTANQVLRP…DQLSVFGDFT (233 aa)) is alpha N-terminal domain (alpha-NTD). Positions 248–332 (VDPVLLRPID…AGVAQHGMLG (85 aa)) are alpha C-terminal domain (alpha-CTD).

This sequence belongs to the RNA polymerase alpha chain family. In terms of assembly, homodimer. The RNAP catalytic core consists of 2 alpha, 1 beta, 1 beta' and 1 omega subunit. When a sigma factor is associated with the core the holoenzyme is formed, which can initiate transcription.

It carries out the reaction RNA(n) + a ribonucleoside 5'-triphosphate = RNA(n+1) + diphosphate. Functionally, DNA-dependent RNA polymerase catalyzes the transcription of DNA into RNA using the four ribonucleoside triphosphates as substrates. The polypeptide is DNA-directed RNA polymerase subunit alpha (Xanthomonas axonopodis pv. citri (strain 306)).